We begin with the raw amino-acid sequence, 179 residues long: Large ribosomal subunit protein uL5 (179 aa).

This sequence belongs to the universal ribosomal protein uL5 family. In terms of assembly, part of the 50S ribosomal subunit; part of the 5S rRNA/L5/L18/L25 subcomplex. Contacts the 5S rRNA and the P site tRNA. Forms a bridge to the 30S subunit in the 70S ribosome.

This is one of the proteins that bind and probably mediate the attachment of the 5S RNA into the large ribosomal subunit, where it forms part of the central protuberance. In the 70S ribosome it contacts protein S13 of the 30S subunit (bridge B1b), connecting the 2 subunits; this bridge is implicated in subunit movement. Contacts the P site tRNA; the 5S rRNA and some of its associated proteins might help stabilize positioning of ribosome-bound tRNAs. The polypeptide is Large ribosomal subunit protein uL5 (Vesicomyosocius okutanii subsp. Calyptogena okutanii (strain HA)).